We begin with the raw amino-acid sequence, 356 residues long: Serpentine receptor class epsilon-29 (356 aa).

The next 7 membrane-spanning stretches (helical) occupy residues 29–49 (IVEL…IYII), 61–81 (ILAI…LITI), 119–139 (LLIF…FGVL), 161–181 (LFIP…TSLA), 190–210 (FLAQ…YFFV), 251–271 (LVFV…ALFY), and 281–301 (FVEN…IFSV).

It belongs to the nematode receptor-like protein sre family.

It is found in the membrane. The chain is Serpentine receptor class epsilon-29 (sre-29) from Caenorhabditis elegans.